The sequence spans 235 residues: 2-C-methyl-D-erythritol 4-phosphate cytidylyltransferase (235 aa).

Belongs to the IspD/TarI cytidylyltransferase family. IspD subfamily.

The enzyme catalyses 2-C-methyl-D-erythritol 4-phosphate + CTP + H(+) = 4-CDP-2-C-methyl-D-erythritol + diphosphate. Its pathway is isoprenoid biosynthesis; isopentenyl diphosphate biosynthesis via DXP pathway; isopentenyl diphosphate from 1-deoxy-D-xylulose 5-phosphate: step 2/6. Functionally, catalyzes the formation of 4-diphosphocytidyl-2-C-methyl-D-erythritol from CTP and 2-C-methyl-D-erythritol 4-phosphate (MEP). In Pseudomonas putida (strain GB-1), this protein is 2-C-methyl-D-erythritol 4-phosphate cytidylyltransferase.